A 441-amino-acid polypeptide reads, in one-letter code: MTFSIEKLVDLKRKKWQSKLQNTKKQVLGRCLTNFSRLLSFRKKQETNGKSPRCSKATLAVVVHPTASTTHDDFLRKKQERSGKSPSCSETTLAVELPDVLVEEILQRLPVKYLVRLKSISKGWKSLIESDHLAEKHLRLLEKKYGLKEIKITVERSTSKSICIKFFSRRSGMNAINSDSDDLLRVPGSCNGLVCVYELDSVYIYLLNPMTGVTRTLTPPRGTKLSVGFGIDVVTGTYKVMVLYGFDRVGTVVFDLDTNKWRQRYKTAGPMPLSCIPTPERNPVFVNGSLFWLLASDFSEILVMDLHTEKFRTLSQPNDMDDVDVSSGYIYMWSLEDRLCVSNVRQGLHSYVWVLVQDELSEKWERTRFNLLGHVFPPLSLNSAWFSQTLVSPYQLSSSTCIGSRQRQNSTSALFSRNGDTGAMDAPIELHISVSTPMMPL.

The 47-residue stretch at 91-137 (TTLAVELPDVLVEEILQRLPVKYLVRLKSISKGWKSLIESDHLAEKH) folds into the F-box domain.

The sequence is that of Putative F-box protein At1g33530 from Arabidopsis thaliana (Mouse-ear cress).